A 275-amino-acid polypeptide reads, in one-letter code: MQNITHSWFVQGMIKATSDAWLKGWDERNGGNLTLRLDEADIAPFTDDFHQEPRYIALSQPMPLLANTPFIVTGSGKFFRNVQLDPAANLGVVKVDSDGAGYHILWGLNHEAVPTSELPAHFLSHCERINATDGKDRVIMHCHATNLIALTYVLENNTPLFTRKLWEGSTECLVVFPDGVGILPWMVPGTDEIGQATAQEMQKHSLVLWPFHGVFGSGPTLDETFGLIDTAEKSAEVLVKIYSMGGMKQTITREELVALGKRFGVTPLASALALY.

Residue E117 is part of the active site. Positions 141, 143, and 212 each coordinate Zn(2+).

This sequence belongs to the aldolase class II family. RhaD subfamily. In terms of assembly, homotetramer. Zn(2+) is required as a cofactor.

It localises to the cytoplasm. The catalysed reaction is L-rhamnulose 1-phosphate = (S)-lactaldehyde + dihydroxyacetone phosphate. It participates in carbohydrate degradation; L-rhamnose degradation; glycerone phosphate from L-rhamnose: step 3/3. In terms of biological role, catalyzes the reversible cleavage of L-rhamnulose-1-phosphate to dihydroxyacetone phosphate (DHAP) and L-lactaldehyde. The protein is Rhamnulose-1-phosphate aldolase of Citrobacter koseri (strain ATCC BAA-895 / CDC 4225-83 / SGSC4696).